The sequence spans 239 residues: Sugar fermentation stimulation protein homolog (239 aa).

The protein belongs to the SfsA family.

The polypeptide is Sugar fermentation stimulation protein homolog (Microcystis aeruginosa (strain NIES-843 / IAM M-2473)).